A 230-amino-acid chain; its full sequence is Lipoprotein-releasing system ATP-binding protein LolD (230 aa).

Residues 6–230 (LQVQAVSKSY…GYLQVPESAQ (225 aa)) form the ABC transporter domain. Position 42 to 49 (42 to 49 (GTSGSGKS)) interacts with ATP.

This sequence belongs to the ABC transporter superfamily. Lipoprotein translocase (TC 3.A.1.125) family. As to quaternary structure, the complex is composed of two ATP-binding proteins (LolD) and two transmembrane proteins (LolC and LolE).

It is found in the cell inner membrane. Its function is as follows. Part of the ABC transporter complex LolCDE involved in the translocation of mature outer membrane-directed lipoproteins, from the inner membrane to the periplasmic chaperone, LolA. Responsible for the formation of the LolA-lipoprotein complex in an ATP-dependent manner. The protein is Lipoprotein-releasing system ATP-binding protein LolD of Shewanella oneidensis (strain ATCC 700550 / JCM 31522 / CIP 106686 / LMG 19005 / NCIMB 14063 / MR-1).